The chain runs to 388 residues: N-acetylneuraminate epimerase (388 aa).

Positions 1–26 are cleaved as a signal peptide; sequence MFSLIGAKRQAIGIAALAWSTGAVMA. 7 Kelch repeats span residues 48-92, 94-147, 149-186, 187-232, 236-285, 307-356, and 358-387; these read MAYV…AAAG, KIFA…VGLA, GRIA…KLVD, SYMG…ATMG, FLLV…VAGA, ANAA…DAPG, and LLVV…LSVE.

It belongs to the NanM family. Homodimer.

The protein resides in the periplasm. The catalysed reaction is N-acetyl-alpha-neuraminate = N-acetyl-beta-neuraminate. Functionally, converts alpha-N-acetylneuranimic acid (Neu5Ac) to the beta-anomer, accelerating the equilibrium between the alpha- and beta-anomers. Probably facilitates sialidase-negative bacteria to compete successfully for limited amounts of extracellular Neu5Ac, which is likely taken up in the beta-anomer. In addition, the rapid removal of sialic acid from solution might be advantageous to the bacterium to damp down host responses. The sequence is that of N-acetylneuraminate epimerase from Brucella suis (strain ATCC 23445 / NCTC 10510).